The following is a 198-amino-acid chain: Thymidine kinase (198 aa).

ATP-binding positions include 15–22 (GCMFSGKT) and 87–90 (DEAQ). The Proton acceptor role is filled by E88. 4 residues coordinate Zn(2+): C144, C147, C182, and H185.

The protein belongs to the thymidine kinase family. As to quaternary structure, homotetramer.

Its subcellular location is the cytoplasm. It catalyses the reaction thymidine + ATP = dTMP + ADP + H(+). This is Thymidine kinase from Coprothermobacter proteolyticus (strain ATCC 35245 / DSM 5265 / OCM 4 / BT).